The chain runs to 485 residues: Proline--tRNA ligase (485 aa).

Belongs to the class-II aminoacyl-tRNA synthetase family. ProS type 3 subfamily. As to quaternary structure, homodimer.

Its subcellular location is the cytoplasm. The catalysed reaction is tRNA(Pro) + L-proline + ATP = L-prolyl-tRNA(Pro) + AMP + diphosphate. Catalyzes the attachment of proline to tRNA(Pro) in a two-step reaction: proline is first activated by ATP to form Pro-AMP and then transferred to the acceptor end of tRNA(Pro). The sequence is that of Proline--tRNA ligase from Methanopyrus kandleri (strain AV19 / DSM 6324 / JCM 9639 / NBRC 100938).